Reading from the N-terminus, the 96-residue chain is Small, acid-soluble spore protein gamma-type (96 aa).

A compositionally biased stretch (polar residues) spans 1-15; sequence MNTKNFTPQESRTNA. The disordered stretch occupies residues 1–96; it reads MNTKNFTPQE…SEAKKRNNQQ (96 aa). The segment covering 16–27 has biased composition (low complexity); sequence QQVRQQNQQSAQ. The span at 28 to 41 shows a compositional bias: polar residues; it reads GTSSGFATEFASET. Repeats lie at residues 28–52 and 61–87; these read GTSSGFATEFASETNAQQVRQQNQQ and GATAGGFNTEFASETNVQQVRQQNQQS. Low complexity-rich tracts occupy residues 42-57 and 76-86; these read NAQQVRQQNQQSAQAN and NVQQVRQQNQQ.

It belongs to the gamma-type SASP family.

Functionally, SASP are proteins degraded in the first minutes of spore germination and provide amino acids for both new protein synthesis and metabolism. These proteins may be involved in dormant spore's high resistance to UV light. This is Small, acid-soluble spore protein gamma-type from Laceyella sacchari (Thermoactinomyces thalpophilus).